Here is a 253-residue protein sequence, read N- to C-terminus: 3-dehydroquinate dehydratase (253 aa).

3-dehydroquinate-binding positions include E46 to R48 and R82. Catalysis depends on H143, which acts as the Proton donor/acceptor. K170 acts as the Schiff-base intermediate with substrate in catalysis. 3-dehydroquinate-binding residues include R213, S232, and Q236.

The protein belongs to the type-I 3-dehydroquinase family. As to quaternary structure, homodimer.

It carries out the reaction 3-dehydroquinate = 3-dehydroshikimate + H2O. It participates in metabolic intermediate biosynthesis; chorismate biosynthesis; chorismate from D-erythrose 4-phosphate and phosphoenolpyruvate: step 3/7. Involved in the third step of the chorismate pathway, which leads to the biosynthesis of aromatic amino acids. Catalyzes the cis-dehydration of 3-dehydroquinate (DHQ) and introduces the first double bond of the aromatic ring to yield 3-dehydroshikimate. The protein is 3-dehydroquinate dehydratase of Bacillus velezensis (strain DSM 23117 / BGSC 10A6 / LMG 26770 / FZB42) (Bacillus amyloliquefaciens subsp. plantarum).